The chain runs to 93 residues: Small ribosomal subunit protein uS19 (93 aa).

It belongs to the universal ribosomal protein uS19 family.

Its function is as follows. Protein S19 forms a complex with S13 that binds strongly to the 16S ribosomal RNA. The sequence is that of Small ribosomal subunit protein uS19 from Frankia casuarinae (strain DSM 45818 / CECT 9043 / HFP020203 / CcI3).